Reading from the N-terminus, the 312-residue chain is Bark storage protein B (312 aa).

An N-terminal signal peptide occupies residues 1-24 (MPQQSMQASLRDPIAEIERSNCKI). An N-linked (GlcNAc...) asparagine glycan is attached at N70.

To wound-inducible poplar endochitinases. As to quaternary structure, monomer. In terms of tissue distribution, bark tissue.

In terms of biological role, may play a role in nitrogen storage. The protein is Bark storage protein B (BSP) of Populus deltoides (Eastern poplar).